Consider the following 125-residue polypeptide: uncharacterized protein (125 aa).

Positions 1–33 (MLPHQNSSYTRQGTNDAQANDMRSPSQLPTSVN) are enriched in polar residues. Disordered regions lie at residues 1–35 (MLPH…VNIE) and 44–63 (SEKL…KKHT). A compositionally biased stretch (basic residues) spans 53 to 63 (NRSRSGIKKHT).

This is an uncharacterized protein from Schizosaccharomyces pombe (strain 972 / ATCC 24843) (Fission yeast).